The chain runs to 137 residues: Lysozyme (137 aa).

The N-terminal stretch at 1-20 is a signal peptide; that stretch reads MQRLLGSIVILATVFTFCEA. Positions 21 to 135 constitute an I-type lysozyme domain; it reads TISSACLRCI…EKVHQQGCNV (115 aa). Intrachain disulfides connect C26/C102, C31/C37, C42/C51, C64/C84, C74/C80, and C98/C116. Catalysis depends on E34, which acts as the Proton donor. D45 serves as the catalytic Nucleophile. A substrate-binding site is contributed by 57–63; it reads KENYWED. Substrate-binding positions include Y88 and 109–111; that span reads HNG.

Belongs to the glycosyl hydrolase 22 family. Type-I lysozyme subfamily. As to expression, expressed in the basophil cells of the oyster digestive gland.

It is found in the secreted. The enzyme catalyses Hydrolysis of (1-&gt;4)-beta-linkages between N-acetylmuramic acid and N-acetyl-D-glucosamine residues in a peptidoglycan and between N-acetyl-D-glucosamine residues in chitodextrins.. Has bacteriolytic activity. May play a role in digestion and in the host defense mechanisms against invading microbes. This is Lysozyme (lysoz) from Magallana gigas (Pacific oyster).